We begin with the raw amino-acid sequence, 556 residues long: Formate--tetrahydrofolate ligase 1 (556 aa).

65–72 (TPAGEGKS) is an ATP binding site.

The protein belongs to the formate--tetrahydrofolate ligase family.

It carries out the reaction (6S)-5,6,7,8-tetrahydrofolate + formate + ATP = (6R)-10-formyltetrahydrofolate + ADP + phosphate. The protein operates within one-carbon metabolism; tetrahydrofolate interconversion. This Streptococcus pyogenes serotype M28 (strain MGAS6180) protein is Formate--tetrahydrofolate ligase 1.